Reading from the N-terminus, the 374-residue chain is Histidinol-phosphate aminotransferase (374 aa).

At lysine 211 the chain carries N6-(pyridoxal phosphate)lysine. Positions 351-368 are enriched in low complexity; it reads GNSSQDSASKSNSSANND. Residues 351–374 are disordered; that stretch reads GNSSQDSASKSNSSANNDELNASN.

This sequence belongs to the class-II pyridoxal-phosphate-dependent aminotransferase family. Histidinol-phosphate aminotransferase subfamily. As to quaternary structure, homodimer. The cofactor is pyridoxal 5'-phosphate.

The catalysed reaction is L-histidinol phosphate + 2-oxoglutarate = 3-(imidazol-4-yl)-2-oxopropyl phosphate + L-glutamate. It functions in the pathway amino-acid biosynthesis; L-histidine biosynthesis; L-histidine from 5-phospho-alpha-D-ribose 1-diphosphate: step 7/9. The polypeptide is Histidinol-phosphate aminotransferase (Photobacterium profundum (strain SS9)).